Consider the following 542-residue polypeptide: Chaperonin GroEL 1 (542 aa).

Residues 29–32, 86–90, Gly413, 477–479, and Asp493 each bind ATP; these read TLGP, DGTTT, and NAA.

It belongs to the chaperonin (HSP60) family. In terms of assembly, forms a cylinder of 14 subunits composed of two heptameric rings stacked back-to-back. Interacts with the co-chaperonin GroES.

The protein resides in the cytoplasm. It catalyses the reaction ATP + H2O + a folded polypeptide = ADP + phosphate + an unfolded polypeptide.. Together with its co-chaperonin GroES, plays an essential role in assisting protein folding. The GroEL-GroES system forms a nano-cage that allows encapsulation of the non-native substrate proteins and provides a physical environment optimized to promote and accelerate protein folding. This Kineococcus radiotolerans (strain ATCC BAA-149 / DSM 14245 / SRS30216) protein is Chaperonin GroEL 1.